The primary structure comprises 329 residues: RING finger protein 225 (329 aa).

Residues 1 to 55 form a disordered region; the sequence is MPCPRPFWLRHSRAPQGSGPSSPGSLSAPRSPSRGEDQEEEEEEEGDGSPGSGPI. Residues 14–32 show a composition bias toward low complexity; sequence APQGSGPSSPGSLSAPRSP. The segment covering 37-47 has biased composition (acidic residues); it reads DQEEEEEEEGD. The RING-type zinc-finger motif lies at 64–112; the sequence is CLICVSSFDGVFKLPKRLDCGHVFCLECLARLSLATAGGGNAVACPVCR. The interval 122-181 is disordered; the sequence is GLPALPTQSGLLPRDARAPPSRQGSVRFDRRRGLLYLRPPPPPPGPRKARAPPPPPPLRL. Residues 159–179 show a composition bias toward pro residues; sequence RPPPPPPGPRKARAPPPPPPL. Residues 203 to 223 form a helical membrane-spanning segment; that stretch reads ALAVLVAAGLVVSGVYIFFLI. The disordered stretch occupies residues 248-329; that stretch reads FPPRPPPGSP…RGARRLWGSQ (82 aa). Positions 281-293 are enriched in acidic residues; the sequence is DALEPEAGPEDPA. Basic and acidic residues predominate over residues 294–304; the sequence is EAERTLDRRSD.

The protein resides in the membrane. This is RING finger protein 225 from Homo sapiens (Human).